An 878-amino-acid chain; its full sequence is Outer membrane usher protein FimD (878 aa).

Residues 1–45 form the signal peptide; the sequence is MSYLNLRLYQRNTQCLHIRKHRLAGFFVRLVVACAFAAQAPLSSA. Cysteines 855 and 877 form a disulfide.

This sequence belongs to the fimbrial export usher family.

The protein resides in the cell outer membrane. In terms of biological role, involved in the export and assembly of FimA fimbrial subunits across the outer membrane. This is Outer membrane usher protein FimD (fimD) from Escherichia coli (strain K12).